The sequence spans 248 residues: PF03932 family protein CutC (248 aa).

The protein belongs to the CutC family. In terms of assembly, homodimer.

Its subcellular location is the cytoplasm. This Shigella boydii serotype 18 (strain CDC 3083-94 / BS512) protein is PF03932 family protein CutC.